Reading from the N-terminus, the 130-residue chain is Small ribosomal subunit protein uS8 (130 aa).

It belongs to the universal ribosomal protein uS8 family.

This Strongylocentrotus purpuratus (Purple sea urchin) protein is Small ribosomal subunit protein uS8 (RPS15A).